Reading from the N-terminus, the 233-residue chain is 7-cyano-7-deazaguanine synthase (233 aa).

8 to 18 provides a ligand contact to ATP; it reads LSGGLDSTTCM. Zn(2+) contacts are provided by Cys186, Cys194, Cys197, and Cys200.

This sequence belongs to the QueC family. In terms of assembly, homodimer. Requires Zn(2+) as cofactor.

The enzyme catalyses 7-carboxy-7-deazaguanine + NH4(+) + ATP = 7-cyano-7-deazaguanine + ADP + phosphate + H2O + H(+). Its pathway is purine metabolism; 7-cyano-7-deazaguanine biosynthesis. In terms of biological role, catalyzes the ATP-dependent conversion of 7-carboxy-7-deazaguanine (CDG) to 7-cyano-7-deazaguanine (preQ(0)). The protein is 7-cyano-7-deazaguanine synthase of Desulfitobacterium hafniense (strain DSM 10664 / DCB-2).